The following is a 97-amino-acid chain: uncharacterized protein (97 aa).

Residues 38–97 (TSPPDWNKFSGKVSINEPTTSKSKSKSTSTSTSTSTSTSTSTSTSSSTSSTSSTTSSINK) are disordered. The segment covering 56 to 97 (TTSKSKSKSTSTSTSTSTSTSTSTSTSSSTSSTSSTTSSINK) has biased composition (low complexity).

This is an uncharacterized protein from Dictyostelium discoideum (Social amoeba).